Reading from the N-terminus, the 326-residue chain is Putative nickel insertion protein (326 aa).

Belongs to the LarC family.

The chain is Putative nickel insertion protein from Enterococcus faecalis (strain ATCC 700802 / V583).